Reading from the N-terminus, the 374-residue chain is Arf-GAP with dual PH domain-containing protein 1 (374 aa).

An Arf-GAP domain is found at 7–126 (RAVLELLQRP…EFIYPEKQEP (120 aa)). The C4-type zinc finger occupies 21–44 (CADCGAPDPDWASYTLGVFICLSC). A Phosphoserine; by PKC modification is found at S87. PH domains are found at residues 129-230 (AGYR…AARF) and 252-356 (NYLK…KAVD). Position 272 is an N6-acetyllysine (K272). A Phosphothreonine; by PKC modification is found at T276.

As to quaternary structure, interacts with PRKCA, PRKCI and PRKCZ. Interacts with the N-terminal region of PRKD1. Post-translationally, phosphorylated by PRKCA, PRKCI, PRKCZ and PRKD1 in vitro. Expressed at highest levels in brain and at lower levels in peripheral blood leukocytes.

It localises to the nucleus. Its subcellular location is the cytoplasm. In terms of biological role, GTPase-activating protein for the ADP ribosylation factor family. Binds phosphatidylinositol 3,4,5-trisphosphate (PtdInsP3) and inositol 1,3,4,5-tetrakisphosphate (InsP4). Regulates the incorporation of CD63 and CD9 into multivesicular bodies. This chain is Arf-GAP with dual PH domain-containing protein 1 (ADAP1), found in Homo sapiens (Human).